The chain runs to 174 residues: Cytidylate kinase (174 aa).

7–15 (GLPGTGTTT) provides a ligand contact to ATP.

Belongs to the cytidylate kinase family. Type 2 subfamily.

It is found in the cytoplasm. It catalyses the reaction CMP + ATP = CDP + ADP. The enzyme catalyses dCMP + ATP = dCDP + ADP. This chain is Cytidylate kinase, found in Methanococcus vannielii (strain ATCC 35089 / DSM 1224 / JCM 13029 / OCM 148 / SB).